The following is a 673-amino-acid chain: eEF1A lysine and N-terminal methyltransferase homolog (673 aa).

The protein belongs to the methyltransferase superfamily.

The catalysed reaction is L-lysyl-[protein] + S-adenosyl-L-methionine = N(6)-methyl-L-lysyl-[protein] + S-adenosyl-L-homocysteine + H(+). It carries out the reaction N(6)-methyl-L-lysyl-[protein] + S-adenosyl-L-methionine = N(6),N(6)-dimethyl-L-lysyl-[protein] + S-adenosyl-L-homocysteine + H(+). The enzyme catalyses N-terminal glycyl-L-lysyl-L-glutamyl-[protein] + 3 S-adenosyl-L-methionine = N-terminal N,N,N-trimethyl-glycyl-L-lysyl-L-glutamyl-[protein] + 3 S-adenosyl-L-homocysteine + 3 H(+). Dual methyltransferase. It catalyzes N-terminal methylation of target proteins via its C-terminus. It catalyzes dimethylation on lysine residues of target proteins via its N-terminus. The chain is eEF1A lysine and N-terminal methyltransferase homolog from Drosophila melanogaster (Fruit fly).